The primary structure comprises 404 residues: Probable tRNA sulfurtransferase (404 aa).

A THUMP domain is found at 60 to 165; sequence QPVVEALKLV…DEAAYISYEE (106 aa). Residues 183–184, 208–209, R265, G287, and Q296 contribute to the ATP site; these read ML and HF.

This sequence belongs to the ThiI family.

It localises to the cytoplasm. The enzyme catalyses [ThiI sulfur-carrier protein]-S-sulfanyl-L-cysteine + a uridine in tRNA + 2 reduced [2Fe-2S]-[ferredoxin] + ATP + H(+) = [ThiI sulfur-carrier protein]-L-cysteine + a 4-thiouridine in tRNA + 2 oxidized [2Fe-2S]-[ferredoxin] + AMP + diphosphate. It catalyses the reaction [ThiS sulfur-carrier protein]-C-terminal Gly-Gly-AMP + S-sulfanyl-L-cysteinyl-[cysteine desulfurase] + AH2 = [ThiS sulfur-carrier protein]-C-terminal-Gly-aminoethanethioate + L-cysteinyl-[cysteine desulfurase] + A + AMP + 2 H(+). It functions in the pathway cofactor biosynthesis; thiamine diphosphate biosynthesis. Catalyzes the ATP-dependent transfer of a sulfur to tRNA to produce 4-thiouridine in position 8 of tRNAs, which functions as a near-UV photosensor. Also catalyzes the transfer of sulfur to the sulfur carrier protein ThiS, forming ThiS-thiocarboxylate. This is a step in the synthesis of thiazole, in the thiamine biosynthesis pathway. The sulfur is donated as persulfide by IscS. The polypeptide is Probable tRNA sulfurtransferase (Streptococcus pyogenes serotype M6 (strain ATCC BAA-946 / MGAS10394)).